The primary structure comprises 332 residues: Glycerol-3-phosphate dehydrogenase [NAD(P)+] (332 aa).

NADPH is bound by residues Trp13, Lys34, and Lys108. Sn-glycerol 3-phosphate contacts are provided by Lys108, Gly136, and Ser138. Position 140 (Ala140) interacts with NADPH. Lys191, Asp244, Ser254, Arg255, and Asn256 together coordinate sn-glycerol 3-phosphate. Lys191 serves as the catalytic Proton acceptor. Position 255 (Arg255) interacts with NADPH. NADPH contacts are provided by Val279 and Glu281.

It belongs to the NAD-dependent glycerol-3-phosphate dehydrogenase family.

It is found in the cytoplasm. The catalysed reaction is sn-glycerol 3-phosphate + NAD(+) = dihydroxyacetone phosphate + NADH + H(+). It carries out the reaction sn-glycerol 3-phosphate + NADP(+) = dihydroxyacetone phosphate + NADPH + H(+). It functions in the pathway membrane lipid metabolism; glycerophospholipid metabolism. Catalyzes the reduction of the glycolytic intermediate dihydroxyacetone phosphate (DHAP) to sn-glycerol 3-phosphate (G3P), the key precursor for phospholipid synthesis. This Francisella tularensis subsp. holarctica (strain FTNF002-00 / FTA) protein is Glycerol-3-phosphate dehydrogenase [NAD(P)+].